Here is a 389-residue protein sequence, read N- to C-terminus: Probable dual-specificity RNA methyltransferase RlmN (389 aa).

Glutamate 114 functions as the Proton acceptor in the catalytic mechanism. The Radical SAM core domain occupies 120–358 (QHYGLSVCVT…CVVRQEHGTD (239 aa)). Cysteines 127 and 363 form a disulfide. Positions 134, 138, and 141 each coordinate [4Fe-4S] cluster. Residues 186-187 (GE), serine 218, 241-243 (SLH), and asparagine 319 contribute to the S-adenosyl-L-methionine site. The S-methylcysteine intermediate role is filled by cysteine 363. The segment at 370-389 (TMKRDRQKAVAEASGKSEGK) is disordered. Residues 371–389 (MKRDRQKAVAEASGKSEGK) show a composition bias toward basic and acidic residues.

Belongs to the radical SAM superfamily. RlmN family. Requires [4Fe-4S] cluster as cofactor.

It is found in the cytoplasm. It catalyses the reaction adenosine(2503) in 23S rRNA + 2 reduced [2Fe-2S]-[ferredoxin] + 2 S-adenosyl-L-methionine = 2-methyladenosine(2503) in 23S rRNA + 5'-deoxyadenosine + L-methionine + 2 oxidized [2Fe-2S]-[ferredoxin] + S-adenosyl-L-homocysteine. The enzyme catalyses adenosine(37) in tRNA + 2 reduced [2Fe-2S]-[ferredoxin] + 2 S-adenosyl-L-methionine = 2-methyladenosine(37) in tRNA + 5'-deoxyadenosine + L-methionine + 2 oxidized [2Fe-2S]-[ferredoxin] + S-adenosyl-L-homocysteine. Specifically methylates position 2 of adenine 2503 in 23S rRNA and position 2 of adenine 37 in tRNAs. This is Probable dual-specificity RNA methyltransferase RlmN from Streptococcus thermophilus (strain CNRZ 1066).